A 639-amino-acid chain; its full sequence is Extracellular metalloproteinase mep (639 aa).

A signal peptide spans 1 to 16 (MHMLSFIGALALPVFV). Positions 17–245 (CAQSCEPASL…IHGVVDYISE (229 aa)) are excised as a propeptide. 4 N-linked (GlcNAc...) asparagine glycosylation sites follow: Asn287, Asn320, Asn336, and Asn368. A Zn(2+)-binding site is contributed by His429. Residue Glu430 is part of the active site. His433 contacts Zn(2+). Asn509 carries an N-linked (GlcNAc...) asparagine glycan.

It belongs to the peptidase M36 family. Zn(2+) is required as a cofactor.

Its subcellular location is the secreted. Its function is as follows. Secreted metalloproteinase that allows assimilation of proteinaceous substrates. The polypeptide is Extracellular metalloproteinase mep (mep) (Aspergillus flavus (strain ATCC 200026 / FGSC A1120 / IAM 13836 / NRRL 3357 / JCM 12722 / SRRC 167)).